The sequence spans 257 residues: Beta-fibrinogenase mucrofibrase-3 (257 aa).

The first 18 residues, 1–18 (MVLIRVLANLLILQLSYA), serve as a signal peptide directing secretion. Residues 19-24 (QKSSEL) constitute a propeptide that is removed on maturation. One can recognise a Peptidase S1 domain in the interval 25-248 (VIGGDECNIN…HLDWIKGIIA (224 aa)). 6 disulfides stabilise this stretch: Cys-31–Cys-162, Cys-49–Cys-65, Cys-97–Cys-255, Cys-141–Cys-209, Cys-173–Cys-188, and Cys-199–Cys-224. Catalysis depends on charge relay system residues His-64 and Asp-109. The active-site Charge relay system is the Ser-203.

It belongs to the peptidase S1 family. Snake venom subfamily. Monomer. Expressed by the venom gland.

It localises to the secreted. In terms of biological role, snake venom serine protease with fibrinogenolytic activities. Cleaves beta-chain of fibrinogen (FGB) efficiently and shows relatively lower activity on alpha-chain. The polypeptide is Beta-fibrinogenase mucrofibrase-3 (Protobothrops mucrosquamatus (Taiwan habu)).